Reading from the N-terminus, the 155-residue chain is Small ribosomal subunit protein uS7 (155 aa).

The protein belongs to the universal ribosomal protein uS7 family. As to quaternary structure, part of the 30S ribosomal subunit. Contacts proteins S9 and S11.

Its function is as follows. One of the primary rRNA binding proteins, it binds directly to 16S rRNA where it nucleates assembly of the head domain of the 30S subunit. Is located at the subunit interface close to the decoding center, probably blocks exit of the E-site tRNA. The chain is Small ribosomal subunit protein uS7 from Nautilia profundicola (strain ATCC BAA-1463 / DSM 18972 / AmH).